A 1510-amino-acid polypeptide reads, in one-letter code: Chromosome partition protein MukB (1510 aa).

Residues 6–30 (ELENEIELESDEVIMENENVEEIVD) are a coiled coil. 75–82 (GGNGAGKS) is an ATP binding site. 7 coiled-coil regions span residues 346–506 (QHRL…HKMS), 553–611 (QQTP…EDIS), 673–706 (MQSQ…RLSQ), 821–846 (SAAR…AQIA), 876–1064 (EALM…IQLQ), 1094–1149 (ERAR…RELV), and 1249–1304 (DAIE…LQNI). Positions 707 to 824 (PDGSEDPRLN…EIPLFGSAAR (118 aa)) are flexible hinge.

It belongs to the SMC family. MukB subfamily. In terms of assembly, homodimerization via its hinge domain. Binds to DNA via its C-terminal region. Interacts, and probably forms a ternary complex, with MukE and MukF via its C-terminal region. The complex formation is stimulated by calcium or magnesium. Interacts with tubulin-related protein FtsZ.

It localises to the cytoplasm. Its subcellular location is the nucleoid. Functionally, plays a central role in chromosome condensation, segregation and cell cycle progression. Functions as a homodimer, which is essential for chromosome partition. Involved in negative DNA supercoiling in vivo, and by this means organize and compact chromosomes. May achieve or facilitate chromosome segregation by condensation DNA from both sides of a centrally located replisome during cell division. This chain is Chromosome partition protein MukB, found in Haemophilus influenzae (strain PittGG).